A 117-amino-acid polypeptide reads, in one-letter code: Large ribosomal subunit protein bL20 (117 aa).

This sequence belongs to the bacterial ribosomal protein bL20 family.

Its function is as follows. Binds directly to 23S ribosomal RNA and is necessary for the in vitro assembly process of the 50S ribosomal subunit. It is not involved in the protein synthesizing functions of that subunit. The chain is Large ribosomal subunit protein bL20 from Chromohalobacter salexigens (strain ATCC BAA-138 / DSM 3043 / CIP 106854 / NCIMB 13768 / 1H11).